A 223-amino-acid polypeptide reads, in one-letter code: Uracil phosphoribosyltransferase (223 aa).

5-phospho-alpha-D-ribose 1-diphosphate-binding positions include Arg86, Arg111, and 145-153 (DPILATGST). Uracil contacts are provided by residues Ile209 and 214–216 (GDA). Asp215 provides a ligand contact to 5-phospho-alpha-D-ribose 1-diphosphate.

The protein belongs to the UPRTase family. Mg(2+) serves as cofactor.

It carries out the reaction UMP + diphosphate = 5-phospho-alpha-D-ribose 1-diphosphate + uracil. The protein operates within pyrimidine metabolism; UMP biosynthesis via salvage pathway; UMP from uracil: step 1/1. Allosterically activated by GTP. Catalyzes the conversion of uracil and 5-phospho-alpha-D-ribose 1-diphosphate (PRPP) to UMP and diphosphate. The sequence is that of Uracil phosphoribosyltransferase from Natronomonas pharaonis (strain ATCC 35678 / DSM 2160 / CIP 103997 / JCM 8858 / NBRC 14720 / NCIMB 2260 / Gabara) (Halobacterium pharaonis).